Reading from the N-terminus, the 418-residue chain is Methionine aminopeptidase 2 (418 aa).

Positions 18–49 (VSEPAAVDDSEVTEDATVQDKKKKKKKKKKKG) are disordered. Basic residues predominate over residues 38 to 49 (KKKKKKKKKKKG). His172 provides a ligand contact to substrate. Residues Asp192, Asp203, and His272 each contribute to the a divalent metal cation site. His280 contacts substrate. Positions 305 and 399 each coordinate a divalent metal cation.

This sequence belongs to the peptidase M24A family. Methionine aminopeptidase eukaryotic type 2 subfamily. Co(2+) serves as cofactor. The cofactor is Zn(2+). It depends on Mn(2+) as a cofactor. Fe(2+) is required as a cofactor.

It is found in the cytoplasm. The enzyme catalyses Release of N-terminal amino acids, preferentially methionine, from peptides and arylamides.. Cotranslationally removes the N-terminal methionine from nascent proteins. The N-terminal methionine is often cleaved when the second residue in the primary sequence is small and uncharged (Met-Ala-, Cys, Gly, Pro, Ser, Thr, or Val). This chain is Methionine aminopeptidase 2, found in Kluyveromyces lactis (strain ATCC 8585 / CBS 2359 / DSM 70799 / NBRC 1267 / NRRL Y-1140 / WM37) (Yeast).